Consider the following 500-residue polypeptide: Glycogen synthase (500 aa).

Lys20 is an ADP-alpha-D-glucose binding site.

The protein belongs to the glycosyltransferase 1 family. Bacterial/plant glycogen synthase subfamily.

It catalyses the reaction [(1-&gt;4)-alpha-D-glucosyl](n) + ADP-alpha-D-glucose = [(1-&gt;4)-alpha-D-glucosyl](n+1) + ADP + H(+). The protein operates within glycan biosynthesis; glycogen biosynthesis. Synthesizes alpha-1,4-glucan chains using ADP-glucose. This Desulforudis audaxviator (strain MP104C) protein is Glycogen synthase.